The sequence spans 365 residues: Histidinol-phosphate aminotransferase (365 aa).

The residue at position 220 (Lys220) is an N6-(pyridoxal phosphate)lysine.

It belongs to the class-II pyridoxal-phosphate-dependent aminotransferase family. Histidinol-phosphate aminotransferase subfamily. Homodimer. Pyridoxal 5'-phosphate is required as a cofactor.

The enzyme catalyses L-histidinol phosphate + 2-oxoglutarate = 3-(imidazol-4-yl)-2-oxopropyl phosphate + L-glutamate. Its pathway is amino-acid biosynthesis; L-histidine biosynthesis; L-histidine from 5-phospho-alpha-D-ribose 1-diphosphate: step 7/9. This Neisseria meningitidis serogroup B (strain ATCC BAA-335 / MC58) protein is Histidinol-phosphate aminotransferase.